A 78-amino-acid chain; its full sequence is Small ribosomal subunit protein bS18 (78 aa).

The protein belongs to the bacterial ribosomal protein bS18 family. Part of the 30S ribosomal subunit. Forms a tight heterodimer with protein bS6.

Functionally, binds as a heterodimer with protein bS6 to the central domain of the 16S rRNA, where it helps stabilize the platform of the 30S subunit. This is Small ribosomal subunit protein bS18 from Beutenbergia cavernae (strain ATCC BAA-8 / DSM 12333 / CCUG 43141 / JCM 11478 / NBRC 16432 / NCIMB 13614 / HKI 0122).